Here is a 505-residue protein sequence, read N- to C-terminus: Light-independent protochlorophyllide reductase subunit B (505 aa).

Position 36 (aspartate 36) interacts with [4Fe-4S] cluster. Aspartate 291 serves as the catalytic Proton donor. 426–427 lines the substrate pocket; the sequence is GM.

It belongs to the ChlB/BchB/BchZ family. As to quaternary structure, protochlorophyllide reductase is composed of three subunits; ChlL, ChlN and ChlB. Forms a heterotetramer of two ChlB and two ChlN subunits. [4Fe-4S] cluster serves as cofactor.

It carries out the reaction chlorophyllide a + oxidized 2[4Fe-4S]-[ferredoxin] + 2 ADP + 2 phosphate = protochlorophyllide a + reduced 2[4Fe-4S]-[ferredoxin] + 2 ATP + 2 H2O. Its pathway is porphyrin-containing compound metabolism; chlorophyll biosynthesis (light-independent). Functionally, component of the dark-operative protochlorophyllide reductase (DPOR) that uses Mg-ATP and reduced ferredoxin to reduce ring D of protochlorophyllide (Pchlide) to form chlorophyllide a (Chlide). This reaction is light-independent. The NB-protein (ChlN-ChlB) is the catalytic component of the complex. The sequence is that of Light-independent protochlorophyllide reductase subunit B from Gloeobacter violaceus (strain ATCC 29082 / PCC 7421).